Here is a 172-residue protein sequence, read N- to C-terminus: LOB domain-containing protein 4 (172 aa).

Positions 12-113 (SPCAACKLLR…AQLALAQAEV (102 aa)) constitute an LOB domain. Positions 125–152 (PGHGLCPDSPSSSGSPSSKQVSPQDNKG) are disordered. Low complexity predominate over residues 131 to 147 (PDSPSSSGSPSSKQVSP).

It belongs to the LOB domain-containing protein family. As to expression, expressed in young shoots, roots, stems, leaves and flowers.

The chain is LOB domain-containing protein 4 (LBD4) from Arabidopsis thaliana (Mouse-ear cress).